Reading from the N-terminus, the 726-residue chain is Catalase-peroxidase (726 aa).

The tract at residues M1 to R25 is disordered. Positions W96 to Y218 form a cross-link, tryptophyl-tyrosyl-methioninium (Trp-Tyr) (with M-244). The active-site Proton acceptor is the H97. Positions Y218–M244 form a cross-link, tryptophyl-tyrosyl-methioninium (Tyr-Met) (with W-96). Position 259 (H259) interacts with heme b.

Belongs to the peroxidase family. Peroxidase/catalase subfamily. Homodimer or homotetramer. Heme b is required as a cofactor. In terms of processing, formation of the three residue Trp-Tyr-Met cross-link is important for the catalase, but not the peroxidase activity of the enzyme.

The catalysed reaction is H2O2 + AH2 = A + 2 H2O. The enzyme catalyses 2 H2O2 = O2 + 2 H2O. Functionally, bifunctional enzyme with both catalase and broad-spectrum peroxidase activity. The chain is Catalase-peroxidase from Chelativorans sp. (strain BNC1).